The following is a 363-amino-acid chain: 3-methyl-D-ornithine--L-lysine ligase (363 aa).

K10 contributes to the ATP binding site. L11–Q12 lines the L-lysine pocket. ATP contacts are provided by residues D31, D49–V50, and E72–N73. Position 72 (E72) interacts with L-lysine. Positions E85–G269 constitute an ATP-grasp domain. Residues K104, K131, S138, and E160–V163 contribute to the ADP site. D-ornithine-binding positions include S169 to E171 and D225. Residues E227, E239, and D241 each contribute to the Mg(2+) site. E239 contacts ADP. D-ornithine is bound by residues R243 to T248 and E302. S246 and E302 together coordinate L-lysine.

This sequence belongs to the PylC family. It depends on Mg(2+) as a cofactor.

The catalysed reaction is (3R)-3-methyl-D-ornithine + L-lysine + ATP = (3R)-3-methyl-D-ornithyl-N(6)-L-lysine + ADP + phosphate + H(+). The protein operates within amino-acid biosynthesis; L-pyrrolysine biosynthesis. Is required for the biosynthesis of pyrrolysine. Catalyzes the ATP-dependent ligation between (3R)-3-methyl-D-ornithine and L-lysine, leading to (3R)-3-methyl-D-ornithyl-N6-L-lysine. The protein is 3-methyl-D-ornithine--L-lysine ligase of Methanosarcina acetivorans (strain ATCC 35395 / DSM 2834 / JCM 12185 / C2A).